A 290-amino-acid chain; its full sequence is MTFRIDAHQHFWQMASRDGYWPPQTLDAIYRDFGPQDLEPLLARSGVQRTVVVQSLPTQEDTRYLLDVASRTSFVAAVVGWVDLKSTDAPADIASLARDPKFRGIRPMLQDLADDDWIDDPVLEPAIDAMLAHDLAFDALVTPRHLPALLAFARRYPRLRIVIDHAAKPPIASGRSEAWHVAMSELAAHPNVHCKLSGLWTEAGPHPDLLRVEPYVRAVCDWFGASRLIWGSDWPVSRLAGHFGDYGAWLAWCEQCCDRFLGPDARARVFGGNACHFYRIDRPSGDQHAQ.

It belongs to the metallo-dependent hydrolases superfamily.

It catalyses the reaction L-fucono-1,5-lactone + H2O = L-fuconate + H(+). It carries out the reaction L-fucono-1,4-lactone + H2O = L-fuconate + H(+). The catalysed reaction is D-arabinono-1,4-lactone + H2O = D-arabinonate + H(+). The enzyme catalyses L-xylono-1,4-lactone + H2O = L-xylonate + H(+). It catalyses the reaction L-galactono-1,4-lactone + H2O = L-galactonate + H(+). Its function is as follows. Catalyzes the hydrolysis of L-fucono-1,5-lactone to L-fuconate. Can also hydrolyze L-fucono-1,4-lactone, L-galactono-1,4-lactone D-arabinono-1,4-lactone and L-xylono-1,4-lactone. The protein is L-fucono-1,5-lactonase of Burkholderia ambifaria (strain ATCC BAA-244 / DSM 16087 / CCUG 44356 / LMG 19182 / AMMD) (Burkholderia cepacia (strain AMMD)).